Consider the following 550-residue polypeptide: Chaperonin GroEL (550 aa).

ATP contacts are provided by residues 30–33, K51, 87–91, G415, 479–481, and D495; these read TLGP, DGTTT, and NAA.

Belongs to the chaperonin (HSP60) family. As to quaternary structure, forms a cylinder of 14 subunits composed of two heptameric rings stacked back-to-back. Interacts with the co-chaperonin GroES.

The protein resides in the cytoplasm. The enzyme catalyses ATP + H2O + a folded polypeptide = ADP + phosphate + an unfolded polypeptide.. Together with its co-chaperonin GroES, plays an essential role in assisting protein folding. The GroEL-GroES system forms a nano-cage that allows encapsulation of the non-native substrate proteins and provides a physical environment optimized to promote and accelerate protein folding. The sequence is that of Chaperonin GroEL from Burkholderia mallei (strain NCTC 10247).